A 1200-amino-acid polypeptide reads, in one-letter code: DNA polymerase subunit gamma-1 (1200 aa).

Disordered regions lie at residues 471-515 and 667-688; these read QKKT…RPSM and MDLS…SSEH. Residues 472–481 show a composition bias toward basic residues; it reads KKTKISKKQK. Positions 494 to 512 are enriched in basic and acidic residues; the sequence is LVEDHNEDPGPPTEKEESR.

Belongs to the DNA polymerase type-A family. In terms of assembly, heterotrimer composed of a catalytic subunit and a homodimer of accessory subunits. The cofactor is Mg(2+).

Its subcellular location is the mitochondrion. The protein localises to the mitochondrion matrix. It localises to the mitochondrion nucleoid. It carries out the reaction DNA(n) + a 2'-deoxyribonucleoside 5'-triphosphate = DNA(n+1) + diphosphate. Its function is as follows. Involved in the replication of mitochondrial DNA. Associates with mitochondrial DNA. In Xenopus laevis (African clawed frog), this protein is DNA polymerase subunit gamma-1 (polg).